Consider the following 414-residue polypeptide: Arrestin domain-containing protein 3 (414 aa).

2 short sequence motifs (PPxY motif) span residues 346–349 (PPSY) and 391–394 (PPLY). The tract at residues 393–414 (LYSEIDPNPDQSSEDRPSCPSR) is disordered. The span at 405–414 (SEDRPSCPSR) shows a compositional bias: basic and acidic residues.

This sequence belongs to the arrestin family. Interacts (via PPxY motifs) with NEDD4 (via WW domains). Interacts with ADRB2. Interacts with ADRB3. Interacts with HGS (via PPxY motifs). Does not bind TXN (thioredoxin). Interacts with ITCH.

Its subcellular location is the cytoplasm. The protein resides in the cell membrane. It localises to the lysosome. The protein localises to the endosome. It is found in the early endosome. In terms of biological role, adapter protein that plays a role in regulating cell-surface expression of adrenergic receptors and probably also other G protein-coupled receptors. Plays a role in NEDD4-mediated ubiquitination and endocytosis af activated ADRB2 and subsequent ADRB2 degradation. May recruit NEDD4 to ADRB2. Alternatively, may function as adapter protein that does not play a major role in recruiting NEDD4 to ADRB2, but rather plays a role in a targeting ADRB2 to endosomes. This chain is Arrestin domain-containing protein 3 (Arrdc3), found in Rattus norvegicus (Rat).